A 245-amino-acid chain; its full sequence is Orotidine 5'-phosphate decarboxylase (245 aa).

Residues Asp-22, Lys-44, 71–80 (DLKFHDIPNT), Thr-131, Arg-192, Gln-201, Gly-221, and Arg-222 contribute to the substrate site. Lys-73 functions as the Proton donor in the catalytic mechanism.

It belongs to the OMP decarboxylase family. Type 1 subfamily. In terms of assembly, homodimer.

The enzyme catalyses orotidine 5'-phosphate + H(+) = UMP + CO2. The protein operates within pyrimidine metabolism; UMP biosynthesis via de novo pathway; UMP from orotate: step 2/2. In terms of biological role, catalyzes the decarboxylation of orotidine 5'-monophosphate (OMP) to uridine 5'-monophosphate (UMP). The chain is Orotidine 5'-phosphate decarboxylase from Salmonella gallinarum (strain 287/91 / NCTC 13346).